The sequence spans 120 residues: NAD(P)H-quinone oxidoreductase subunit 3, chloroplastic (120 aa).

Helical transmembrane passes span Tyr-9–Ser-29, Met-64–Met-84, and Leu-89–Val-109.

The protein belongs to the complex I subunit 3 family. As to quaternary structure, NDH is composed of at least 16 different subunits, 5 of which are encoded in the nucleus.

The protein resides in the plastid. It localises to the chloroplast thylakoid membrane. It carries out the reaction a plastoquinone + NADH + (n+1) H(+)(in) = a plastoquinol + NAD(+) + n H(+)(out). It catalyses the reaction a plastoquinone + NADPH + (n+1) H(+)(in) = a plastoquinol + NADP(+) + n H(+)(out). In terms of biological role, NDH shuttles electrons from NAD(P)H:plastoquinone, via FMN and iron-sulfur (Fe-S) centers, to quinones in the photosynthetic chain and possibly in a chloroplast respiratory chain. The immediate electron acceptor for the enzyme in this species is believed to be plastoquinone. Couples the redox reaction to proton translocation, and thus conserves the redox energy in a proton gradient. The chain is NAD(P)H-quinone oxidoreductase subunit 3, chloroplastic from Huperzia lucidula (Shining clubmoss).